The chain runs to 100 residues: Urease subunit gamma (100 aa).

This sequence belongs to the urease gamma subunit family. In terms of assembly, heterotrimer of UreA (gamma), UreB (beta) and UreC (alpha) subunits. Three heterotrimers associate to form the active enzyme.

The protein localises to the cytoplasm. It carries out the reaction urea + 2 H2O + H(+) = hydrogencarbonate + 2 NH4(+). It participates in nitrogen metabolism; urea degradation; CO(2) and NH(3) from urea (urease route): step 1/1. This chain is Urease subunit gamma, found in Yersinia bercovieri.